Here is a 495-residue protein sequence, read N- to C-terminus: Membrane-bound lytic murein transglycosylase F (495 aa).

Positions 1-29 (MEIRKLSLSTIRSIITSLSVLVLVISASA) are cleaved as a signal peptide. The interval 30–273 (TLVRSTPPNV…VTKHFFERHI (244 aa)) is non-LT domain. The LT domain stretch occupies residues 274-495 (DEVTTGEAMV…TAAQGENLSL (222 aa)). E320 is an active-site residue.

It in the N-terminal section; belongs to the bacterial solute-binding protein 3 family. The protein in the C-terminal section; belongs to the transglycosylase Slt family.

Its subcellular location is the cell outer membrane. It carries out the reaction Exolytic cleavage of the (1-&gt;4)-beta-glycosidic linkage between N-acetylmuramic acid (MurNAc) and N-acetylglucosamine (GlcNAc) residues in peptidoglycan, from either the reducing or the non-reducing ends of the peptidoglycan chains, with concomitant formation of a 1,6-anhydrobond in the MurNAc residue.. Functionally, murein-degrading enzyme that degrades murein glycan strands and insoluble, high-molecular weight murein sacculi, with the concomitant formation of a 1,6-anhydromuramoyl product. Lytic transglycosylases (LTs) play an integral role in the metabolism of the peptidoglycan (PG) sacculus. Their lytic action creates space within the PG sacculus to allow for its expansion as well as for the insertion of various structures such as secretion systems and flagella. The sequence is that of Membrane-bound lytic murein transglycosylase F from Cellvibrio japonicus (strain Ueda107) (Pseudomonas fluorescens subsp. cellulosa).